The sequence spans 142 residues: Hemoglobin subunit alpha-A (142 aa).

One can recognise a Globin domain in the interval valine 2–arginine 142. Residue histidine 59 participates in O2 binding. Residue histidine 88 participates in heme b binding.

The protein belongs to the globin family. Heterotetramer of two alpha chains and two beta chains. Red blood cells.

Functionally, involved in oxygen transport from the lung to the various peripheral tissues. The polypeptide is Hemoglobin subunit alpha-A (HBAA) (Accipiter gentilis (Northern goshawk)).